Here is a 333-residue protein sequence, read N- to C-terminus: Electron transfer flavoprotein subunit alpha, mitochondrial (333 aa).

A mitochondrion-targeting transit peptide spans 1-19 (MFRAAAPGQLRRAASLLRF). Residues 20–204 (QSTLVIAEHA…GISEWLDQKL (185 aa)) form a domain I region. Residue K59 is modified to N6-acetyllysine; alternate. K59 is modified (N6-succinyllysine; alternate). K62 is modified (N6-acetyllysine). K69 carries the N6-acetyllysine; alternate modification. K69 is subject to N6-succinyllysine; alternate. K75 carries the post-translational modification N6-acetyllysine. K85 carries the post-translational modification N6-acetyllysine; alternate. Residue K85 is modified to N6-succinyllysine; alternate. Position 93 is a phosphothreonine (T93). N6-acetyllysine occurs at positions 101 and 139. A Phosphoserine modification is found at S140. At K158 the chain carries N6-acetyllysine; alternate. K158 carries the post-translational modification N6-succinyllysine; alternate. At K164 the chain carries N6-acetyllysine. K187 is modified (N6-succinyllysine). At K203 the chain carries N6-acetyllysine; alternate. K203 bears the N6-succinyllysine; alternate mark. Residues 205–333 (TKSDRPELTG…PEMTEILKKK (129 aa)) are domain II. At K216 the chain carries N6-succinyllysine. An FAD-binding site is contributed by R223. Residues K226 and K232 each carry the N6-acetyllysine; alternate modification. 2 positions are modified to N6-succinyllysine; alternate: K226 and K232. Residues S248, 263-266 (VGQT), 281-286 (SGAIQH), and N300 each bind FAD. The residue at position 301 (K301) is an N6-succinyllysine. 318 to 319 (DL) provides a ligand contact to FAD.

This sequence belongs to the ETF alpha-subunit/FixB family. As to quaternary structure, heterodimer composed of ETFA and ETFB. Identified in a complex that contains ETFA, ETFB and ETFRF1. Interaction with ETFRF1 promotes dissociation of the bound FAD and loss of electron transfer activity. Interacts with TASOR. FAD is required as a cofactor. Expressed in the spermatogonia, spermatocytes, ovary and granular cells within the cerebellum.

It is found in the mitochondrion matrix. Its function is as follows. Heterodimeric electron transfer flavoprotein that accepts electrons from several mitochondrial dehydrogenases, including acyl-CoA dehydrogenases, glutaryl-CoA and sarcosine dehydrogenase. It transfers the electrons to the main mitochondrial respiratory chain via ETF-ubiquinone oxidoreductase (ETF dehydrogenase). Required for normal mitochondrial fatty acid oxidation and normal amino acid metabolism. This Mus musculus (Mouse) protein is Electron transfer flavoprotein subunit alpha, mitochondrial (Etfa).